Consider the following 385-residue polypeptide: Acetate kinase (385 aa).

Position 8 (Asn-8) interacts with Mg(2+). Lys-15 serves as a coordination point for ATP. Position 85 (Arg-85) interacts with substrate. The active-site Proton donor/acceptor is the Asp-142. ATP contacts are provided by residues 200–204 (HLGNG), 275–277 (DMR), and 323–327 (GIGEN). Residue Glu-373 participates in Mg(2+) binding.

It belongs to the acetokinase family. In terms of assembly, homodimer. Mg(2+) is required as a cofactor. The cofactor is Mn(2+).

The protein resides in the cytoplasm. It carries out the reaction acetate + ATP = acetyl phosphate + ADP. It functions in the pathway metabolic intermediate biosynthesis; acetyl-CoA biosynthesis; acetyl-CoA from acetate: step 1/2. Functionally, catalyzes the formation of acetyl phosphate from acetate and ATP. Can also catalyze the reverse reaction. This Francisella tularensis subsp. holarctica (strain OSU18) protein is Acetate kinase.